Here is a 446-residue protein sequence, read N- to C-terminus: MMQLKKRYFALILLLFLWSGCDRGVDPQPDPLQPDVYLLVNARAAHTNGEESINMDAEDFEDRVHSLAMLVFDSNTGEKVAEHFSSSIGSGTSTYVFTVKLKPGQRDFFFVANIPNMQTAMASIVNKSDMNHFMQVFRDLDPIHYHNATNNNGFPMSRMYSNQTVTIGGTITQPLPFKPDGENNVKLQRVVAKLDVNIVEGVENLQKIELCNANVHYRLVPNQSEPIQFYGPVELRRVGATNQWLGYMPEAIVESTKWWGNTGNAENKPINFFRLTTRGGLVYDVPIITHEGAIPGGQYLPFAKGLLADKPSYTVYRNRHYIYRIKTLPDKIEVKYSICDWNIVTNDTYMGYGYNVGVDEQGNVTITNTMQNCDPHVVRLVAKNGAYFGSQPTDTSVEFTELANGASQTFKVNKDAVAVGSAYLEVYYNPDLNATGVVPDKVFIKK.

The first 20 residues, 1 to 20 (MMQLKKRYFALILLLFLWSG), serve as a signal peptide directing secretion. A lipid anchor (N-palmitoyl cysteine) is attached at Cys21. Cys21 carries the S-diacylglycerol cysteine lipid modification. Residues 21–43 (CDRGVDPQPDPLQPDVYLLVNAR) constitute a propeptide that is removed on maturation.

It belongs to the bacteroidetes fimbrillin superfamily. FimB/Mfa2 family. Component of the fimbrium tip. Minor fimbriae are composed of a structural subunit, most often Mfa1, and the accessory subunits Mfa3, Mfa4 and Mfa5. Fimbrium assembly occurs by linear, head-to-tail oligomerization of fimbrial subunits. This is mediated via insertion of a C-terminal beta-strand from one subunit into a groove in the N-terminal domain of the following subunit. Mfa3 is required for Mfa4 and Mfa5 insertion into the fimbrium.

The protein resides in the fimbrium. It localises to the cell outer membrane. Its function is as follows. Tip subunit of the minor fimbriae. These filamentous pili are attached to the cell surface; they mediate biofilm formation, adhesion onto host cells and onto other bacteria that are part of the oral microbiome. They play an important role in invasion of periodontal tissues and are recognized as major virulence factors. Fimbrium subunits from different strains have highly divergent sequences, and this correlates with pathogenicity. The protein is Minor fimbrium tip subunit Mfa3 (mfa3) of Porphyromonas gingivalis (strain ATCC 33277 / DSM 20709 / CIP 103683 / JCM 12257 / NCTC 11834 / 2561).